Consider the following 141-residue polypeptide: Hemoglobin subunit alpha-D (141 aa).

One can recognise a Globin domain in the interval 1-141 (MLTADDKKLI…VAAVLAEKYR (141 aa)). 2 residues coordinate heme b: H58 and H87.

The protein belongs to the globin family. As to quaternary structure, heterotetramer of two alpha-D chains and two beta chains. In terms of tissue distribution, red blood cells.

Functionally, involved in oxygen transport from the lung to the various peripheral tissues. In Aegypius monachus (Cinereous vulture), this protein is Hemoglobin subunit alpha-D (HBAD).